A 440-amino-acid polypeptide reads, in one-letter code: Elongation factor 1-gamma (440 aa).

Ala-2 carries the N-acetylalanine modification. Residues 2 to 87 (AAGTLYTYPE…YVSNEELRGS (86 aa)) enclose the GST N-terminal domain. The GST C-terminal domain occupies 88–216 (TPEAAAQVVQ…VKLCEKMAQF (129 aa)). N6-acetyllysine occurs at positions 147 and 212. The segment covering 221–257 (FAESQPKKDTPRKEKGSREEKLKPQAERKEGKEEKKA) has biased composition (basic and acidic residues). Positions 221 to 267 (FAESQPKKDTPRKEKGSREEKLKPQAERKEGKEEKKAAAPAPEEELD) are disordered. A Glycyl lysine isopeptide (Lys-Gly) (interchain with G-Cter in SUMO1) cross-link involves residue Lys-256. The 162-residue stretch at 279–440 (AKDPFAHLPK…KAFNQGKIFK (162 aa)) folds into the EF-1-gamma C-terminal domain. Residue Lys-288 forms a Glycyl lysine isopeptide (Lys-Gly) (interchain with G-Cter in SUMO2) linkage. Lys-404 carries the post-translational modification N6-acetyllysine. Lys-437 is modified (N6-acetyllysine; alternate). Lys-437 bears the N6-malonyllysine; alternate mark.

In terms of assembly, EF-1 is composed of four subunits: alpha, beta, delta, and gamma.

Probably plays a role in anchoring the complex to other cellular components. The chain is Elongation factor 1-gamma (EEF1G) from Bos taurus (Bovine).